Consider the following 160-residue polypeptide: Prostaglandin E synthase 3 (160 aa).

Residues Met1–Thr90 form the CS domain. The residue at position 33 (Lys33) is an N6-acetyllysine. Lys35 is covalently cross-linked (Glycyl lysine isopeptide (Lys-Gly) (interchain with G-Cter in SUMO2)). Position 44 is a phosphoserine (Ser44). A Glycyl lysine isopeptide (Lys-Gly) (interchain with G-Cter in SUMO2) cross-link involves residue Lys65. Phosphoserine occurs at positions 85, 100, 113, 118, 148, and 151. The tract at residues Ser124 to Glu160 is disordered. Over residues Gly132 to Asp153 the composition is skewed to acidic residues. The PXLE motif motif lies at Pro157 to Glu160.

It belongs to the p23/wos2 family. Probably forms a complex composed of chaperones HSP90 and HSP70, co-chaperones STIP1/HOP, CDC37, PPP5C, PTGES3/p23, TSC1 and client protein TSC2. Binds to the progesterone receptor. Interacts with TERT; the interaction, together with HSP90AA1, is required for correct assembly and stabilization of the telomerase holoenzyme complex. Interacts (via PXLE motif) with EGLN1/PHD2, recruiting EGLN1/PHD2 to the HSP90 pathway to facilitate HIF alpha proteins hydroxylation. Interacts with HSP90AA1, FLCN, FNIP1 and FNIP2. In terms of processing, proteolytically cleaved by caspase-7 (CASP7) in response to apoptosis, leading to its inactivation. Detected in testis and ovary, at lower levels in endometrium, myometrium, kidney and lung, and only faintly in spleen, heart and muscle (at protein level). Expressed at high levels in glandular and luminal epithelial cells of the endometrium, but also detected in stromal cells (at protein level).

Its subcellular location is the cytoplasm. The enzyme catalyses prostaglandin H2 = prostaglandin E2. It functions in the pathway lipid metabolism; prostaglandin biosynthesis. Cytosolic prostaglandin synthase that catalyzes the oxidoreduction of prostaglandin endoperoxide H2 (PGH2) to prostaglandin E2 (PGE2). Molecular chaperone that localizes to genomic response elements in a hormone-dependent manner and disrupts receptor-mediated transcriptional activation, by promoting disassembly of transcriptional regulatory complexes. Facilitates HIF alpha proteins hydroxylation via interaction with EGLN1/PHD2, leading to recruit EGLN1/PHD2 to the HSP90 pathway. This is Prostaglandin E synthase 3 (PTGES3) from Bos taurus (Bovine).